The sequence spans 388 residues: Mannitol-1-phosphate 5-dehydrogenase (388 aa).

NAD(+) is bound at residue 5–16 (AIQFGGGNIGRG). Lysine 213 is an active-site residue.

The protein belongs to the mannitol dehydrogenase family. Monomer.

The catalysed reaction is D-mannitol 1-phosphate + NAD(+) = beta-D-fructose 6-phosphate + NADH + H(+). Its function is as follows. Catalyzes the NAD(H)-dependent interconversion of D-fructose 6-phosphate and D-mannitol 1-phosphate in the mannitol metabolic pathway. The protein is Mannitol-1-phosphate 5-dehydrogenase (mpdA) of Neosartorya fischeri (strain ATCC 1020 / DSM 3700 / CBS 544.65 / FGSC A1164 / JCM 1740 / NRRL 181 / WB 181) (Aspergillus fischerianus).